A 219-amino-acid chain; its full sequence is 7-cyano-7-deazaguanine synthase (219 aa).

10-20 (FSGGQDSTTCL) is a binding site for ATP. Zn(2+)-binding residues include C188, C197, C200, and C203.

The protein belongs to the QueC family. Zn(2+) is required as a cofactor.

The catalysed reaction is 7-carboxy-7-deazaguanine + NH4(+) + ATP = 7-cyano-7-deazaguanine + ADP + phosphate + H2O + H(+). It participates in purine metabolism; 7-cyano-7-deazaguanine biosynthesis. Functionally, catalyzes the ATP-dependent conversion of 7-carboxy-7-deazaguanine (CDG) to 7-cyano-7-deazaguanine (preQ(0)). In Bacteroides fragilis (strain ATCC 25285 / DSM 2151 / CCUG 4856 / JCM 11019 / LMG 10263 / NCTC 9343 / Onslow / VPI 2553 / EN-2), this protein is 7-cyano-7-deazaguanine synthase.